A 218-amino-acid chain; its full sequence is Superoxide dismutase [Mn], mitochondrial (218 aa).

A mitochondrion-targeting transit peptide spans 1-21 (MLRFLSKNSVAAIRNVSIARG). His-50 and His-96 together coordinate Mn(2+). Ser-129 is modified (phosphoserine). Mn(2+)-binding residues include Asp-181 and His-185.

The protein belongs to the iron/manganese superoxide dismutase family. In terms of assembly, homodimer. It depends on Mn(2+) as a cofactor.

Its subcellular location is the mitochondrion matrix. It carries out the reaction 2 superoxide + 2 H(+) = H2O2 + O2. Destroys superoxide anion radicals which are normally produced within the cells and which are toxic to biological systems. This chain is Superoxide dismutase [Mn], mitochondrial (sod2), found in Schizosaccharomyces pombe (strain 972 / ATCC 24843) (Fission yeast).